Here is a 62-residue protein sequence, read N- to C-terminus: Photosystem II reaction center protein Z (62 aa).

Transmembrane regions (helical) follow at residues 8 to 28 and 41 to 61; these read AVFA…LVFA and FSGT…NSLI.

This sequence belongs to the PsbZ family. As to quaternary structure, PSII is composed of 1 copy each of membrane proteins PsbA, PsbB, PsbC, PsbD, PsbE, PsbF, PsbH, PsbI, PsbJ, PsbK, PsbL, PsbM, PsbT, PsbY, PsbZ, Psb30/Ycf12, at least 3 peripheral proteins of the oxygen-evolving complex and a large number of cofactors. It forms dimeric complexes.

The protein resides in the plastid. It is found in the chloroplast thylakoid membrane. May control the interaction of photosystem II (PSII) cores with the light-harvesting antenna, regulates electron flow through the 2 photosystem reaction centers. PSII is a light-driven water plastoquinone oxidoreductase, using light energy to abstract electrons from H(2)O, generating a proton gradient subsequently used for ATP formation. This chain is Photosystem II reaction center protein Z, found in Oryza nivara (Indian wild rice).